We begin with the raw amino-acid sequence, 953 residues long: Valine--tRNA ligase (953 aa).

The short motif at 42 to 52 (PNVTGSLHMGH) is the 'HIGH' region element. The 'KMSKS' region motif lies at 554–558 (KMSKS). K557 contributes to the ATP binding site. Positions 884-953 (LIDKDAELAR…EAQKETIAAL (70 aa)) form a coiled coil.

This sequence belongs to the class-I aminoacyl-tRNA synthetase family. ValS type 1 subfamily. In terms of assembly, monomer.

It is found in the cytoplasm. It carries out the reaction tRNA(Val) + L-valine + ATP = L-valyl-tRNA(Val) + AMP + diphosphate. Catalyzes the attachment of valine to tRNA(Val). As ValRS can inadvertently accommodate and process structurally similar amino acids such as threonine, to avoid such errors, it has a 'posttransfer' editing activity that hydrolyzes mischarged Thr-tRNA(Val) in a tRNA-dependent manner. This chain is Valine--tRNA ligase, found in Photobacterium profundum (strain SS9).